The primary structure comprises 379 residues: Cytochrome b (379 aa).

A run of 4 helical transmembrane segments spans residues 33-53 (FGSL…FLAM), 77-98 (WLIR…FIHV), 113-133 (WNIG…GYVL), and 178-198 (FFAF…VHLL). The heme b site is built by His83 and His97. Heme b is bound by residues His182 and His196. A ubiquinone is bound at residue His201. 4 helical membrane passes run 226–246 (TKDL…ALFF), 288–308 (LGGV…PLLN), 320–340 (VTQV…WIGG), and 347–367 (FTTI…ILIP).

The protein belongs to the cytochrome b family. In terms of assembly, the cytochrome bc1 complex contains 11 subunits: 3 respiratory subunits (MT-CYB, CYC1 and UQCRFS1), 2 core proteins (UQCRC1 and UQCRC2) and 6 low-molecular weight proteins (UQCRH/QCR6, UQCRB/QCR7, UQCRQ/QCR8, UQCR10/QCR9, UQCR11/QCR10 and a cleavage product of UQCRFS1). This cytochrome bc1 complex then forms a dimer. The cofactor is heme b.

It is found in the mitochondrion inner membrane. In terms of biological role, component of the ubiquinol-cytochrome c reductase complex (complex III or cytochrome b-c1 complex) that is part of the mitochondrial respiratory chain. The b-c1 complex mediates electron transfer from ubiquinol to cytochrome c. Contributes to the generation of a proton gradient across the mitochondrial membrane that is then used for ATP synthesis. The polypeptide is Cytochrome b (MT-CYB) (Akodon paranaensis (Parana grass mouse)).